A 427-amino-acid polypeptide reads, in one-letter code: Serine--tRNA ligase (427 aa).

230-232 (TSE) is an L-serine binding site. 261–263 (RSE) contacts ATP. Residue glutamate 284 participates in L-serine binding. Residue 348–351 (EISS) participates in ATP binding. Serine 384 provides a ligand contact to L-serine.

It belongs to the class-II aminoacyl-tRNA synthetase family. Type-1 seryl-tRNA synthetase subfamily. Homodimer. The tRNA molecule binds across the dimer.

It localises to the cytoplasm. It carries out the reaction tRNA(Ser) + L-serine + ATP = L-seryl-tRNA(Ser) + AMP + diphosphate + H(+). It catalyses the reaction tRNA(Sec) + L-serine + ATP = L-seryl-tRNA(Sec) + AMP + diphosphate + H(+). It participates in aminoacyl-tRNA biosynthesis; selenocysteinyl-tRNA(Sec) biosynthesis; L-seryl-tRNA(Sec) from L-serine and tRNA(Sec): step 1/1. Its function is as follows. Catalyzes the attachment of serine to tRNA(Ser). Is also able to aminoacylate tRNA(Sec) with serine, to form the misacylated tRNA L-seryl-tRNA(Sec), which will be further converted into selenocysteinyl-tRNA(Sec). This chain is Serine--tRNA ligase, found in Desulforapulum autotrophicum (strain ATCC 43914 / DSM 3382 / VKM B-1955 / HRM2) (Desulfobacterium autotrophicum).